A 128-amino-acid polypeptide reads, in one-letter code: MEQYYGTGRRKEAVARVFLRPGNGKVTVNGQDFNEYFQGLVRAVAALEPLRAVDALGRFDAYITVRGGGKSGQIDAIKLGIARALVQYNPDYRAKLKPLGFLTRDARVVERKKYGKHKARRAPQYSKR.

The protein belongs to the universal ribosomal protein uS9 family. In terms of assembly, part of the 30S ribosomal subunit. Contacts proteins S7 and S10.

Functionally, part of the top of the head of the 30S subunit. The C-terminal region penetrates the head emerging in the P-site where it contacts tRNA. The protein is Small ribosomal subunit protein uS9 (rpsI) of Thermus thermophilus (strain ATCC BAA-163 / DSM 7039 / HB27).